The primary structure comprises 349 residues: Putative F-box/LRR-repeat protein At3g16555 (349 aa).

Positions 1–48 (MVLLPWELEEDILSRLPPRSLVQFRSVCKRWNALFDVKSFNKDQFARA) constitute an F-box domain. Residues 267–290 (VVWISLLTLPPNNLPNLFIVCYGI) form an LRR repeat.

The protein is Putative F-box/LRR-repeat protein At3g16555 of Arabidopsis thaliana (Mouse-ear cress).